The sequence spans 1141 residues: Sterol regulatory element-binding protein 2 (1141 aa).

Positions 1-50 are transcriptional activation (acidic); sequence MDDSGELGGLETMETLTELGDELTLGDIDEMLQFVSNQVGEFPDLFSEQL. The Cytoplasmic segment spans residues 1-479; the sequence is MDDSGELGGL…PPVALGMVDR (479 aa). The disordered stretch occupies residues 48–144; it reads EQLCSSFPGS…PQPQPQPQTQ (97 aa). The span at 63-82 shows a compositional bias: low complexity; the sequence is SSGSSGSSSSSSNGRGSSSG. Polar residues predominate over residues 88-97; that stretch reads VQRSFTQVTL. Positions 98–110 are enriched in low complexity; that stretch reads PSFSPSAASPQAP. The segment covering 114 to 126 has biased composition (polar residues); it reads VKVSPTSVPTTPR. The interaction with LMNA stretch occupies residues 237-491; that stretch reads QQVPVLVQPQ…ILLCVLTFLC (255 aa). The 51-residue stretch at 330 to 380 folds into the bHLH domain; that stretch reads ERRTTHNIIEKRYRSSINDKIIELKDLVMGTDAKMHKSGVLRKAIDYIKYL. The leucine-zipper stretch occupies residues 380–401; that stretch reads LQQVNHKLRQENMVLKLANQKN. A Glycyl lysine isopeptide (Lys-Gly) (interchain with G-Cter in SUMO2) cross-link involves residue lysine 464. The chain crosses the membrane as a helical span at residues 480-500; the sequence is SRILLCVLTFLCLSFNPLTSL. At 501 to 533 the chain is on the lumenal side; sequence LQWGGAHDSDQHPHSGSGRSVLSFESGSGGWFD. A helical transmembrane segment spans residues 534-554; sequence WMMPTLLLWLVNGVIVLSVFV. Residues 555–1139 lie on the Cytoplasmic side of the membrane; sequence KLLVHGEPVI…VKLGGGTAIA (585 aa). Serine 855 and serine 1098 each carry phosphoserine.

It belongs to the SREBP family. Forms a tight complex with SCAP, the SCAP-SREBP complex, in the endoplasmic reticulum membrane and the Golgi apparatus. Interacts with PAQR3; the interaction anchors the SCAP-SREBP complex to the Golgi apparatus in low cholesterol conditions. Interacts (via C-terminal domain) with RNF139. In terms of assembly, homodimer; efficient DNA binding of the soluble transcription factor fragment requires dimerization with another bHLH protein. Interacts with LMNA. Processed in the Golgi apparatus, releasing the protein from the membrane. At low cholesterol the SCAP-SREBP complex is recruited into COPII vesicles for export from the endoplasmic reticulum. In the Golgi, complex SREBPs are cleaved sequentially by site-1 (MBTPS1, S1P) and site-2 (MBTPS2, S2P) protease. The first cleavage by site-1 protease occurs within the luminal loop, the second cleavage by site-2 protease occurs within the first transmembrane domain, releasing the transcription factor from the Golgi membrane. Apoptosis triggers cleavage by the cysteine proteases caspase-3 and caspase-7. Cleavage and activation is induced by mediated cholesterol efflux. Post-translationally, phosphorylated by AMPK, leading to suppress protein processing and nuclear translocation, and repress target gene expression. In terms of processing, SCAP-free SREBF2 is ubiquitinated by the BCR(ARMC5) complex, leading to its degradation. Ubiquitinated; the nuclear form has a rapid turnover and is rapidly ubiquitinated and degraded by the proteasome in the nucleus. In terms of tissue distribution, ubiquitously expressed in adult and fetal tissues.

The protein localises to the endoplasmic reticulum membrane. The protein resides in the golgi apparatus membrane. Its subcellular location is the cytoplasmic vesicle. It is found in the COPII-coated vesicle membrane. It localises to the nucleus. With respect to regulation, activation by cleavage is down-regulated upon activation of SIRT3-dependent PRKAA1/AMPK-alpha signaling cascade which leads to inhibition of ATP-consuming lipogenesis to restore cellular energy balance. Precursor of the transcription factor form (Processed sterol regulatory element-binding protein 2), which is embedded in the endoplasmic reticulum membrane. Low sterol concentrations promote processing of this form, releasing the transcription factor form that translocates into the nucleus and activates transcription of genes involved in cholesterol biosynthesis. Functionally, key transcription factor that regulates expression of genes involved in cholesterol biosynthesis. Binds to the sterol regulatory element 1 (SRE-1) (5'-ATCACCCCAC-3'). Has dual sequence specificity binding to both an E-box motif (5'-ATCACGTGA-3') and to SRE-1 (5'-ATCACCCCAC-3'). Regulates transcription of genes related to cholesterol synthesis pathway. The protein is Sterol regulatory element-binding protein 2 of Homo sapiens (Human).